The following is a 146-amino-acid chain: Ribonuclease H (146 aa).

Positions 1–143 constitute an RNase H type-1 domain; the sequence is MKEIIIYTDG…CDQLARNAIK (143 aa). The Mg(2+) site is built by Asp9, Glu47, Asp70, and Asp135.

This sequence belongs to the RNase H family. In terms of assembly, monomer. Mg(2+) serves as cofactor.

The protein localises to the cytoplasm. It carries out the reaction Endonucleolytic cleavage to 5'-phosphomonoester.. Its function is as follows. Endonuclease that specifically degrades the RNA of RNA-DNA hybrids. In Syntrophomonas wolfei subsp. wolfei (strain DSM 2245B / Goettingen), this protein is Ribonuclease H.